The chain runs to 292 residues: Poly-beta-1,6-N-acetyl-D-glucosamine N-deacetylase (292 aa).

Residues 1 to 28 (MKYRKFIILVLSILIILPVSTLDGHHIA) form the signal peptide. The 179-residue stretch at 114–292 (RSVWINFDDM…WDGFHEKDET (179 aa)) folds into the NodB homology domain.

It belongs to the polysaccharide deacetylase family.

It is found in the secreted. The protein localises to the cell wall. In terms of biological role, catalyzes the N-deacetylation of poly-beta-1,6-N-acetyl-D-glucosamine (PNAG, also referred to as PIA), a biofilm adhesin polysaccharide. N-deacetylation is crucial for attachment of the polysaccharide to the bacterial cell surface; it leads to the introduction of positive charges in the otherwise neutral PIA polymer, allowing electrostatic interactions. The protein is Poly-beta-1,6-N-acetyl-D-glucosamine N-deacetylase (icaB) of Staphylococcus aureus (strain COL).